A 296-amino-acid polypeptide reads, in one-letter code: Enoyl-CoA hydratase AKT3-2 (296 aa).

The Peroxisomal targeting signal type 1 signature appears at 294-296; it reads PKL.

This sequence belongs to the enoyl-CoA hydratase/isomerase family.

The protein localises to the peroxisome. The catalysed reaction is a (3S)-3-hydroxyacyl-CoA = a (2E)-enoyl-CoA + H2O. It catalyses the reaction a 4-saturated-(3S)-3-hydroxyacyl-CoA = a (3E)-enoyl-CoA + H2O. It participates in mycotoxin biosynthesis. In terms of biological role, enoyl-CoA hydratase; part of the gene clusters that mediate the biosynthesis of the host-selective toxins (HSTs) AK-toxins responsible for Japanese pear black spot disease by the Japanese pear pathotype. AK-toxins are esters of 9,10-epoxy 8-hydroxy 9-methyldecatrienoic acid (EDA). On cellular level, AK-toxins affect plasma membrane of susceptible cells and cause a sudden increase in loss of K(+) after a few minutes of toxin treatment. The acyl-CoA ligase AKT1, the hydrolase AKT2 and enoyl-CoA hydratase AKT3 are all involved in the biosynthesis of the AK-, AF- and ACT-toxin common 9,10-epoxy-8-hydroxy-9-methyl-decatrienoic acid (EDA) structural moiety. Part of the EDA biosynthesis occurs in the peroxisome since these 3 enzymes are localized in peroxisomes. The exact roles of the 3 enzymes, as well as of additional AK-toxin clusters enzymes, including AKT4, AKT6 and AKTS1, have still to be elucidated. The Cytochrome P450 monooxygenase AKT7 on the other side functions to limit production of EDA and AK-toxin, probably via the catalysis of a side reaction of EDA or its precursor. The polypeptide is Enoyl-CoA hydratase AKT3-2 (Alternaria alternata (Alternaria rot fungus)).